The primary structure comprises 1470 residues: Gag-Pol polyprotein (1470 aa).

Glycine 2 carries the N-myristoyl glycine; by host lipid modification. The Nuclear export signal signature appears at 16 to 22; sequence FEHIRLR. Residues 26–32 carry the Nuclear localization signal motif; that stretch reads KKKYQIK. The disordered stretch occupies residues 117-144; it reads AVTPPGGQQKNNTGGTATPGGSQNFPAQ. A compositionally biased stretch (polar residues) spans 122–144; sequence GGQQKNNTGGTATPGGSQNFPAQ. CCHC-type zinc fingers lie at residues 398 to 415 and 419 to 436; these read PKCYNCGKFGHMQRQCPE and IKCLKCGKPGHLAKDCRG. The segment at 479–504 is disordered; sequence KEAPAAVCRERETNEKSEQKPPSEQS. Positions 486–504 are enriched in basic and acidic residues; the sequence is CRERETNEKSEQKPPSEQS. One can recognise a Peptidase A2 domain in the interval 531-602; sequence VKALLDTGAD…TPINIIGRNF (72 aa). The active-site For protease activity; shared with dimeric partner is aspartate 536. Positions 658–848 constitute a Reverse transcriptase domain; that stretch reads EGKLSRVGGD…PPFEWMGYKL (191 aa). Aspartate 724, aspartate 799, and aspartate 800 together coordinate Mg(2+). The RT 'primer grip' stretch occupies residues 841–849; that stretch reads FEWMGYKLW. A Tryptophan repeat motif motif is present at residues 1011–1027; that stretch reads WEQWWADYWQVSWIPEW. Residues 1047–1170 form the RNase H type-1 domain; sequence IPGEDVYYVD…IDKLVSKGVR (124 aa). Mg(2+) contacts are provided by aspartate 1056, glutamate 1091, aspartate 1111, and aspartate 1162. The Integrase-type zinc-finger motif lies at 1176–1217; sequence GRIEEAQEEHDRYHSNWRNLADTFGLPQIVAKEIVAMCPKCQ. Residues histidine 1185, histidine 1189, cysteine 1213, and cysteine 1216 each coordinate Zn(2+). The Integrase catalytic domain occupies 1227–1377; it reads VDASPGVWQM…TAAERLINMI (151 aa). The Mg(2+) site is built by aspartate 1237 and aspartate 1289. Positions 1396–1443 form a DNA-binding region, integrase-type; sequence FRVYYREGRDPVWKGPARLIWKGEGAVVLKEGEELKVVPRRKAKIIKD. Residues 1451-1470 are disordered; that stretch reads GDETHLEGAGGSDHQMAGDS.

As to quaternary structure, homotrimer. Interacts with gp41 (via C-terminus). Homodimer. The active site consists of two apposed aspartic acid residues. In terms of assembly, heterodimer of p66 RT and p51 RT (RT p66/p51). Heterodimerization of RT is essential for DNA polymerase activity. Despite the sequence identities, p66 RT and p51 RT have distinct folding. As to quaternary structure, homotetramer; may further associate as a homohexadecamer. It depends on Mg(2+) as a cofactor. Post-translationally, specific enzymatic cleavages by the viral protease yield mature proteins. The protease is released by autocatalytic cleavage. The polyprotein is cleaved during and after budding, this process is termed maturation. Proteolytic cleavage of p66 RT removes the RNase H domain to yield the p51 RT subunit. In terms of processing, capsid protein p24 is phosphorylated.

It localises to the virion. It is found in the host nucleus. The protein resides in the host cytoplasm. The protein localises to the host cell membrane. The enzyme catalyses Specific for a P1 residue that is hydrophobic, and P1' variable, but often Pro.. The catalysed reaction is Endohydrolysis of RNA in RNA/DNA hybrids. Three different cleavage modes: 1. sequence-specific internal cleavage of RNA. Human immunodeficiency virus type 1 and Moloney murine leukemia virus enzymes prefer to cleave the RNA strand one nucleotide away from the RNA-DNA junction. 2. RNA 5'-end directed cleavage 13-19 nucleotides from the RNA end. 3. DNA 3'-end directed cleavage 15-20 nucleotides away from the primer terminus.. It carries out the reaction 3'-end directed exonucleolytic cleavage of viral RNA-DNA hybrid.. It catalyses the reaction DNA(n) + a 2'-deoxyribonucleoside 5'-triphosphate = DNA(n+1) + diphosphate. With respect to regulation, the viral protease is inhibited by many synthetic protease inhibitors (PIs), such as amprenavir, atazanavir, indinavir, loprinavir, nelfinavir, ritonavir and saquinavir. RT can be inhibited either by nucleoside RT inhibitors (NRTIs) or by non nucleoside RT inhibitors (NNRTIs). NRTIs act as chain terminators, whereas NNRTIs inhibit DNA polymerization by binding a small hydrophobic pocket near the RT active site and inducing an allosteric change in this region. Classical NRTIs are abacavir, adefovir (PMEA), didanosine (ddI), lamivudine (3TC), stavudine (d4T), tenofovir (PMPA), zalcitabine (ddC), and zidovudine (AZT). Classical NNRTIs are atevirdine (BHAP U-87201E), delavirdine, efavirenz (DMP-266), emivirine (I-EBU), and nevirapine (BI-RG-587). The tritherapies used as a basic effective treatment of AIDS associate two NRTIs and one NNRTI. Use of protease inhibitors in tritherapy regimens permit more ambitious therapeutic strategies. Its function is as follows. Gag-Pol polyprotein and Gag polyprotein may regulate their own translation, by the binding genomic RNA in the 5'-UTR. At low concentration, Gag-Pol and Gag would promote translation, whereas at high concentration, the polyproteins encapsidate genomic RNA and then shut off translation. Functionally, matrix protein p17 has two main functions: in infected cell, it targets Gag and Gag-pol polyproteins to the plasma membrane via a multipartite membrane-binding signal, that includes its myristointegration complex. The myristoylation signal and the NLS exert conflicting influences its subcellular localization. The key regulation of these motifs might be phosphorylation of a portion of MA molecules on the C-terminal tyrosine at the time of virus maturation, by virion-associated cellular tyrosine kinase. Implicated in the release from host cell mediated by Vpu. In terms of biological role, capsid protein p24 forms the conical core that encapsulates the genomic RNA-nucleocapsid complex in the virion. The core is constituted by capsid protein hexamer subunits. The core is disassembled soon after virion entry. Interaction with host PPIA/CYPA protects the virus from restriction by host TRIM5-alpha and from an unknown antiviral activity in host cells. This capsid restriction by TRIM5 is one of the factors which restricts SIV to the simian species. Nucleocapsid protein p7 encapsulates and protects viral dimeric unspliced (genomic) RNA. Binds these RNAs through its zinc fingers. Facilitates rearangement of nucleic acid secondary structure during retrotranscription of genomic RNA. This capability is referred to as nucleic acid chaperone activity. Its function is as follows. The aspartyl protease mediates proteolytic cleavages of Gag and Gag-Pol polyproteins during or shortly after the release of the virion from the plasma membrane. Cleavages take place as an ordered, step-wise cascade to yield mature proteins. This process is called maturation. Displays maximal activity during the budding process just prior to particle release from the cell. Also cleaves Nef and Vif, probably concomitantly with viral structural proteins on maturation of virus particles. Hydrolyzes host EIF4GI and PABP1 in order to shut off the capped cellular mRNA translation. The resulting inhibition of cellular protein synthesis serves to ensure maximal viral gene expression and to evade host immune response. Functionally, reverse transcriptase/ribonuclease H (RT) is a multifunctional enzyme that converts the viral dimeric RNA genome into dsDNA in the cytoplasm, shortly after virus entry into the cell. This enzyme displays a DNA polymerase activity that can copy either DNA or RNA templates, and a ribonuclease H (RNase H) activity that cleaves the RNA strand of RNA-DNA heteroduplexes in a partially processive 3' to 5' endonucleasic mode. Conversion of viral genomic RNA into dsDNA requires many steps. A tRNA binds to the primer-binding site (PBS) situated at the 5'-end of the viral RNA. RT uses the 3' end of the tRNA primer to perform a short round of RNA-dependent minus-strand DNA synthesis. The reading proceeds through the U5 region and ends after the repeated (R) region which is present at both ends of viral RNA. The portion of the RNA-DNA heteroduplex is digested by the RNase H, resulting in a ssDNA product attached to the tRNA primer. This ssDNA/tRNA hybridizes with the identical R region situated at the 3' end of viral RNA. This template exchange, known as minus-strand DNA strong stop transfer, can be either intra- or intermolecular. RT uses the 3' end of this newly synthesized short ssDNA to perform the RNA-dependent minus-strand DNA synthesis of the whole template. RNase H digests the RNA template except for two polypurine tracts (PPTs) situated at the 5'-end and near the center of the genome. It is not clear if both polymerase and RNase H activities are simultaneous. RNase H can probably proceed both in a polymerase-dependent (RNA cut into small fragments by the same RT performing DNA synthesis) and a polymerase-independent mode (cleavage of remaining RNA fragments by free RTs). Secondly, RT performs DNA-directed plus-strand DNA synthesis using the PPTs that have not been removed by RNase H as primers. PPTs and tRNA primers are then removed by RNase H. The 3' and 5' ssDNA PBS regions hybridize to form a circular dsDNA intermediate. Strand displacement synthesis by RT to the PBS and PPT ends produces a blunt ended, linear dsDNA copy of the viral genome that includes long terminal repeats (LTRs) at both ends. In terms of biological role, integrase catalyzes viral DNA integration into the host chromosome, by performing a series of DNA cutting and joining reactions. This enzyme activity takes place after virion entry into a cell and reverse transcription of the RNA genome in dsDNA. The first step in the integration process is 3' processing. This step requires a complex comprising the viral genome, matrix protein, Vpr and integrase. This complex is called the pre-integration complex (PIC). The integrase protein removes 2 nucleotides from each 3' end of the viral DNA, leaving recessed CA OH's at the 3' ends. In the second step, the PIC enters cell nucleus. This process is mediated through integrase and Vpr proteins, and allows the virus to infect a non dividing cell. This ability to enter the nucleus is specific of lentiviruses, other retroviruses cannot and rely on cell division to access cell chromosomes. In the third step, termed strand transfer, the integrase protein joins the previously processed 3' ends to the 5' ends of strands of target cellular DNA at the site of integration. The 5'-ends are produced by integrase-catalyzed staggered cuts, 5 bp apart. A Y-shaped, gapped, recombination intermediate results, with the 5'-ends of the viral DNA strands and the 3' ends of target DNA strands remaining unjoined, flanking a gap of 5 bp. The last step is viral DNA integration into host chromosome. This involves host DNA repair synthesis in which the 5 bp gaps between the unjoined strands are filled in and then ligated. Since this process occurs at both cuts flanking the SIV genome, a 5 bp duplication of host DNA is produced at the ends of SIV integration. Alternatively, Integrase may catalyze the excision of viral DNA just after strand transfer, this is termed disintegration. The chain is Gag-Pol polyprotein (gag-pol) from Cercopithecidae (Old World monkeys).